The following is a 102-amino-acid chain: Keratin-associated protein 25-1 (102 aa).

Belongs to the PMG family. In terms of assembly, interacts with hair keratins.

In the hair cortex, hair keratin intermediate filaments are embedded in an interfilamentous matrix, consisting of hair keratin-associated proteins (KRTAP), which are essential for the formation of a rigid and resistant hair shaft through their extensive disulfide bond cross-linking with abundant cysteine residues of hair keratins. The matrix proteins include the high-sulfur and high-glycine-tyrosine keratins. This chain is Keratin-associated protein 25-1 (KRTAP25-1), found in Homo sapiens (Human).